The following is a 399-amino-acid chain: S-adenosylmethionine synthase (399 aa).

H15 serves as a coordination point for ATP. D17 lines the Mg(2+) pocket. E43 contacts K(+). Residues E56 and Q99 each coordinate L-methionine. Residues 99-109 (QSPDIARGVNR) form a flexible loop region. Residues 166-168 (DAK), 232-233 (RF), D241, 247-248 (RK), A264, and K268 each bind ATP. D241 is an L-methionine binding site. K272 is a binding site for L-methionine.

It belongs to the AdoMet synthase family. In terms of assembly, homotetramer; dimer of dimers. The cofactor is Mg(2+). K(+) is required as a cofactor.

It is found in the cytoplasm. It carries out the reaction L-methionine + ATP + H2O = S-adenosyl-L-methionine + phosphate + diphosphate. Its pathway is amino-acid biosynthesis; S-adenosyl-L-methionine biosynthesis; S-adenosyl-L-methionine from L-methionine: step 1/1. Functionally, catalyzes the formation of S-adenosylmethionine (AdoMet) from methionine and ATP. The overall synthetic reaction is composed of two sequential steps, AdoMet formation and the subsequent tripolyphosphate hydrolysis which occurs prior to release of AdoMet from the enzyme. The protein is S-adenosylmethionine synthase of Nitrosospira multiformis (strain ATCC 25196 / NCIMB 11849 / C 71).